The chain runs to 71 residues: Beta-defensin 2 (71 aa).

Positions Met1 to Pro20 are cleaved as a signal peptide. Cystine bridges form between Cys37–Cys66, Cys44–Cys59, and Cys49–Cys67.

Belongs to the beta-defensin family. Kidney, uterus and to a lesser extent in heart.

It localises to the secreted. Functionally, has bactericidal activity. The protein is Beta-defensin 2 (Defb2) of Mus musculus (Mouse).